Reading from the N-terminus, the 397-residue chain is Subtilisin-like protease 12 (397 aa).

An N-terminal signal peptide occupies residues 1 to 19 (MSIFKMMLIYFAILWVVNA). Residues 20–116 (AQLLDIDPQG…VEPNKEMQVA (97 aa)) constitute a propeptide that is removed on maturation. Residues 35–115 (YIVVMKDRVS…FVEPNKEMQV (81 aa)) enclose the Inhibitor I9 domain. N-linked (GlcNAc...) asparagine glycosylation is found at asparagine 123, asparagine 136, and asparagine 150. The Peptidase S8 domain maps to 125–397 (TWGLSRISHK…NKLLYNGSGA (273 aa)). Catalysis depends on charge relay system residues aspartate 157 and histidine 188. 3 N-linked (GlcNAc...) asparagine glycosylation sites follow: asparagine 249, asparagine 305, and asparagine 334. The active-site Charge relay system is the serine 343. N-linked (GlcNAc...) asparagine glycosylation is found at asparagine 385 and asparagine 393.

Belongs to the peptidase S8 family.

It is found in the secreted. Functionally, secreted subtilisin-like serine protease with keratinolytic activity that contributes to pathogenicity. In Trichophyton verrucosum (strain HKI 0517), this protein is Subtilisin-like protease 12 (SUB12).